Reading from the N-terminus, the 785-residue chain is Copal-8-ol diphosphate hydratase TPSSA3, chloroplastic (785 aa).

Substrate is bound at residue Arg-240. The Mg(2+) site is built by Asp-372 and Asp-374. Positions 372–375 match the DXDD motif motif; that stretch reads DIDD. A substrate-binding site is contributed by Arg-459.

The protein belongs to the terpene synthase family. Requires Mg(2+) as cofactor.

Its subcellular location is the plastid. It localises to the chloroplast. The enzyme catalyses (2E,6E,10E)-geranylgeranyl diphosphate + H2O = 8-hydroxycopalyl diphosphate. The protein operates within secondary metabolite biosynthesis; terpenoid biosynthesis. In terms of biological role, involved in the biosynthesis of labdane-type diterpenoid including sclareol, a diterpene-diol that is used as fragrance and flavoring, and has anticancer effects (able to kill leukemic and colon cancer cells by apoptosis). Sclareol can also be used as synthesis precursor of ambergris substitution fragance products such as ambrox. Terpene synthase that produces 8-hydroxycopalyl diphosphate from geranylgeranyl diphosphate (GGPP). This chain is Copal-8-ol diphosphate hydratase TPSSA3, chloroplastic, found in Salvia sclarea (Clary sage).